The chain runs to 396 residues: Large ribosomal subunit protein uL4A (396 aa).

Residues 352 to 373 (KAKEKKPDDGKPKAKKPLDAKT) show a composition bias toward basic and acidic residues. The segment at 352–374 (KAKEKKPDDGKPKAKKPLDAKTK) is disordered.

It belongs to the universal ribosomal protein uL4 family. Component of the large ribosomal subunit.

It localises to the cytoplasm. Component of the large ribosomal subunit. The ribosome is a large ribonucleoprotein complex responsible for the synthesis of proteins in the cell. This Xenopus laevis (African clawed frog) protein is Large ribosomal subunit protein uL4A (rpl4-a).